A 192-amino-acid chain; its full sequence is MYQDLIRNELNEAAETLANFLKDEANIHAIQRAAVLLADSFKAGGKVISCGNGGSHCDAMHFAEELTGRYRENRPGYPAIAISDVSHISCVGNDFGYDHIFSRYVEAVGREGDVLLGISTSGNSANVAKAIEAAREKGMKVITLTGKDGGKMAGSADIEIRVPHFGYADRVQEIHIKVIHILIQLIEKEMVK.

The SIS domain occupies 37–192 (LADSFKAGGK…IQLIEKEMVK (156 aa)). Substrate is bound at residue 52-54 (NGG). Zn(2+)-binding residues include His61 and Glu65. Residues Glu65, 93–94 (ND), 119–121 (STS), Ser124, and Gln172 each bind substrate. 2 residues coordinate Zn(2+): Gln172 and His180.

This sequence belongs to the SIS family. GmhA subfamily. As to quaternary structure, homotetramer. It depends on Zn(2+) as a cofactor.

Its subcellular location is the cytoplasm. The enzyme catalyses 2 D-sedoheptulose 7-phosphate = D-glycero-alpha-D-manno-heptose 7-phosphate + D-glycero-beta-D-manno-heptose 7-phosphate. It functions in the pathway carbohydrate biosynthesis; D-glycero-D-manno-heptose 7-phosphate biosynthesis; D-glycero-alpha-D-manno-heptose 7-phosphate and D-glycero-beta-D-manno-heptose 7-phosphate from sedoheptulose 7-phosphate: step 1/1. Its function is as follows. Catalyzes the isomerization of sedoheptulose 7-phosphate in D-glycero-D-manno-heptose 7-phosphate. The chain is Phosphoheptose isomerase from Enterobacter sp. (strain 638).